The primary structure comprises 343 residues: Aspartate carbamoyltransferase catalytic subunit (343 aa).

The segment covering 1-14 has biased composition (polar residues); that stretch reads MTTDTTGRTGNPAA. The interval 1–20 is disordered; that stretch reads MTTDTTGRTGNPAATASPDR. 2 residues coordinate carbamoyl phosphate: R91 and T92. K119 is an L-aspartate binding site. Positions 141, 171, and 174 each coordinate carbamoyl phosphate. L-aspartate-binding residues include R204 and R259. Carbamoyl phosphate-binding residues include G300 and P301.

It belongs to the aspartate/ornithine carbamoyltransferase superfamily. ATCase family. As to quaternary structure, heterododecamer (2C3:3R2) of six catalytic PyrB chains organized as two trimers (C3), and six regulatory PyrI chains organized as three dimers (R2).

It catalyses the reaction carbamoyl phosphate + L-aspartate = N-carbamoyl-L-aspartate + phosphate + H(+). The protein operates within pyrimidine metabolism; UMP biosynthesis via de novo pathway; (S)-dihydroorotate from bicarbonate: step 2/3. In terms of biological role, catalyzes the condensation of carbamoyl phosphate and aspartate to form carbamoyl aspartate and inorganic phosphate, the committed step in the de novo pyrimidine nucleotide biosynthesis pathway. This Burkholderia lata (strain ATCC 17760 / DSM 23089 / LMG 22485 / NCIMB 9086 / R18194 / 383) protein is Aspartate carbamoyltransferase catalytic subunit.